The sequence spans 456 residues: Argininosuccinate lyase (456 aa).

It belongs to the lyase 1 family. Argininosuccinate lyase subfamily.

It is found in the cytoplasm. The catalysed reaction is 2-(N(omega)-L-arginino)succinate = fumarate + L-arginine. It participates in amino-acid biosynthesis; L-arginine biosynthesis; L-arginine from L-ornithine and carbamoyl phosphate: step 3/3. The protein is Argininosuccinate lyase of Listeria monocytogenes serotype 4a (strain HCC23).